Here is a 1412-residue protein sequence, read N- to C-terminus: MPN domain-containing protein CG4751 (1412 aa).

Residues 1–10 (MENGVEHGVD) show a composition bias toward basic and acidic residues. The disordered stretch occupies residues 1–123 (MENGVEHGVD…TKENYEGFNG (123 aa)). 2 stretches are compositionally biased toward acidic residues: residues 23-35 (GEGD…EVEG) and 103-114 (SDAGDEDNDDET). Residues 113-219 (ETKENYEGFN…AYKNTYLRKC (107 aa)) form the RAMA domain. The MPN domain occupies 284 to 420 (ITVNSSALLL…LESVVKCIWI (137 aa)). Residues His-361, His-363, and Asp-374 each coordinate Zn(2+). 7 disordered regions span residues 554–589 (INPP…QKAS), 669–734 (SALN…DIAR), 853–891 (GGSG…NSYK), 1027–1066 (SIPP…QQQQ), 1271–1318 (MKPP…NSGG), 1330–1376 (SSVP…SGGV), and 1389–1412 (LAAP…LSHD). Residues 572-600 (SGRKAEEESNAQAEQKASELKVMSLQEQL) adopt a coiled-coil conformation. Ser-699, Ser-701, Ser-705, Ser-719, Ser-723, and Ser-728 each carry phosphoserine. Residues 702–720 (PAKSDTSSHASTSRTRNSP) show a composition bias toward polar residues. Low complexity-rich tracts occupy residues 873–891 (KSSS…NSYK) and 1036–1066 (SSGS…QQQQ). Over residues 1275–1290 (KSTTPSSARTRESSAS) the composition is skewed to polar residues. Phosphoserine is present on residues Ser-1288 and Ser-1290. A Phosphothreonine modification is found at Thr-1297. The segment covering 1360–1370 (LYGELAPPGAL) has biased composition (low complexity).

Belongs to the peptidase M67 family.

In terms of biological role, probable protease. The sequence is that of MPN domain-containing protein CG4751 from Drosophila melanogaster (Fruit fly).